Reading from the N-terminus, the 425-residue chain is Serine--tRNA ligase (425 aa).

230-232 (TAE) provides a ligand contact to L-serine. An ATP-binding site is contributed by 261 to 263 (RQE). E284 is an L-serine binding site. An ATP-binding site is contributed by 348-351 (EISS). S384 contacts L-serine.

The protein belongs to the class-II aminoacyl-tRNA synthetase family. Type-1 seryl-tRNA synthetase subfamily. As to quaternary structure, homodimer. The tRNA molecule binds across the dimer.

It is found in the cytoplasm. The catalysed reaction is tRNA(Ser) + L-serine + ATP = L-seryl-tRNA(Ser) + AMP + diphosphate + H(+). It carries out the reaction tRNA(Sec) + L-serine + ATP = L-seryl-tRNA(Sec) + AMP + diphosphate + H(+). Its pathway is aminoacyl-tRNA biosynthesis; selenocysteinyl-tRNA(Sec) biosynthesis; L-seryl-tRNA(Sec) from L-serine and tRNA(Sec): step 1/1. Catalyzes the attachment of serine to tRNA(Ser). Is also able to aminoacylate tRNA(Sec) with serine, to form the misacylated tRNA L-seryl-tRNA(Sec), which will be further converted into selenocysteinyl-tRNA(Sec). This Caldanaerobacter subterraneus subsp. tengcongensis (strain DSM 15242 / JCM 11007 / NBRC 100824 / MB4) (Thermoanaerobacter tengcongensis) protein is Serine--tRNA ligase.